Consider the following 379-residue polypeptide: Fructose-1,6-bisphosphate aldolase/phosphatase (379 aa).

The active-site Proton acceptor; for FBP phosphatase activity is the aspartate 13. The Mg(2+) site is built by aspartate 13, histidine 20, aspartate 51, and aspartate 52. Histidine 20 is a beta-D-fructose 1,6-bisphosphate binding site. Position 20 (histidine 20) interacts with dihydroxyacetone phosphate. Tyrosine 89 lines the beta-D-fructose 1,6-bisphosphate pocket. Glutamine 93 contacts Mg(2+). Beta-D-fructose 1,6-bisphosphate is bound at residue 102-103 (GN). Aspartate 130 is a binding site for Mg(2+). Position 131 (lysine 131) interacts with beta-D-fructose 1,6-bisphosphate. Lysine 131 is a binding site for dihydroxyacetone phosphate. The Proton donor/acceptor; for FBP aldolase activity role is filled by tyrosine 227. Residues lysine 230, aspartate 231, and aspartate 232 each coordinate Mg(2+). Lysine 230 functions as the Schiff-base intermediate with DHAP; for FBP aldolase activity in the catalytic mechanism. Residues 240–241 (QS), arginine 264, aspartate 285, and tyrosine 346 contribute to the beta-D-fructose 1,6-bisphosphate site. Residues arginine 264 and aspartate 285 each coordinate dihydroxyacetone phosphate.

This sequence belongs to the FBP aldolase/phosphatase family. In terms of assembly, homooctamer; dimer of tetramers. It depends on Mg(2+) as a cofactor.

It carries out the reaction beta-D-fructose 1,6-bisphosphate + H2O = beta-D-fructose 6-phosphate + phosphate. It catalyses the reaction beta-D-fructose 1,6-bisphosphate = D-glyceraldehyde 3-phosphate + dihydroxyacetone phosphate. Its pathway is carbohydrate biosynthesis; gluconeogenesis. In terms of biological role, catalyzes two subsequent steps in gluconeogenesis: the aldol condensation of dihydroxyacetone phosphate (DHAP) and glyceraldehyde-3-phosphate (GA3P) to fructose-1,6-bisphosphate (FBP), and the dephosphorylation of FBP to fructose-6-phosphate (F6P). The protein is Fructose-1,6-bisphosphate aldolase/phosphatase of Moorella thermoacetica (strain ATCC 39073 / JCM 9320).